Reading from the N-terminus, the 226-residue chain is Lysoplasmalogenase TMEM86B (226 aa).

Over 1 to 23 (MDAGKAGQTLKTHCSAQRPDVCR) the chain is Cytoplasmic. A helical membrane pass occupies residues 24–40 (WLSPFILSCCVYFCLWI). At 41–46 (PEDQLS) the chain is on the extracellular side. A helical membrane pass occupies residues 47–67 (WFAALVKCLPVLCLAGFLWVM). Residues 68 to 75 (SPSGGYTQ) are Cytoplasmic-facing. A helical membrane pass occupies residues 76–93 (LLQGALVCSAVGDACLIW). At 94–100 (PAAFVPG) the chain is on the extracellular side. Residues 101-117 (MAAFATAHLLYVWAFGF) traverse the membrane as a helical segment. The Cytoplasmic segment spans residues 118-123 (SPLQPG). A helical transmembrane segment spans residues 124–140 (LLLLIILAPGPYLSLVL). Over 141-146 (QHLEPD) the chain is Extracellular. Residues 147 to 163 (MVLPVAAYGLILMAMLW) traverse the membrane as a helical segment. Residues 164 to 171 (RGLAQGGS) are Cytoplasmic-facing. Residues 172–188 (AGWGALLFTLSDGVLAW) traverse the membrane as a helical segment. Topologically, residues 189-199 (DTFAQPLPHAH) are extracellular. The chain crosses the membrane as a helical span at residues 200–218 (LVIMTTYYAAQLLITLSAL). The Cytoplasmic portion of the chain corresponds to 219 to 226 (RSPVPKTD).

The protein belongs to the TMEM86 family. Homodimer.

The protein resides in the endoplasmic reticulum membrane. It localises to the cytoplasm. It catalyses the reaction a 1-O-(1Z-alkenyl)-sn-glycero-3-phosphocholine + H2O = a 2,3-saturated aldehyde + sn-glycerol 3-phosphocholine. The enzyme catalyses a 1-O-(1Z-alkenyl)-sn-glycero-3-phosphoethanolamine + H2O = a 2,3-saturated aldehyde + sn-glycero-3-phosphoethanolamine. With respect to regulation, competitively inhibited by lysophosphatidic acid. Functionally, catalyzes the hydrolysis of the vinyl ether bond of choline or ethanolamine lysoplasmalogens, forming fatty aldehyde and glycerophosphocholine or glycerophosphoethanolamine, respectively and is specific for the sn-2-deacylated (lyso) form of plasmalogen. This chain is Lysoplasmalogenase TMEM86B (TMEM86B), found in Homo sapiens (Human).